A 198-amino-acid chain; its full sequence is Dual specificity protein phosphatase 14 (198 aa).

The Tyrosine-protein phosphatase domain occupies 26–167 (GIAQITSSLF…LIDYERQLFG (142 aa)). Residue cysteine 111 is the Phosphocysteine intermediate of the active site.

The protein belongs to the protein-tyrosine phosphatase family. Non-receptor class dual specificity subfamily. As to quaternary structure, interacts with CD28.

The catalysed reaction is O-phospho-L-tyrosyl-[protein] + H2O = L-tyrosyl-[protein] + phosphate. It catalyses the reaction O-phospho-L-seryl-[protein] + H2O = L-seryl-[protein] + phosphate. It carries out the reaction O-phospho-L-threonyl-[protein] + H2O = L-threonyl-[protein] + phosphate. Functionally, involved in the inactivation of MAP kinases. Dephosphorylates ERK, JNK and p38 MAP-kinases. Plays a negative role in TCR signaling by dephosphorylating MAP3K7 adapter TAB1 leading to its inactivation. The sequence is that of Dual specificity protein phosphatase 14 (DUSP14) from Bos taurus (Bovine).